A 264-amino-acid polypeptide reads, in one-letter code: Thymidylate synthase (264 aa).

Position 21 (arginine 21) interacts with dUMP. Residue histidine 51 participates in (6R)-5,10-methylene-5,6,7,8-tetrahydrofolate binding. 126 to 127 (RR) contacts dUMP. The Nucleophile role is filled by cysteine 146. DUMP-binding positions include 166–169 (RSAD), asparagine 177, and 207–209 (HIY). Aspartate 169 contacts (6R)-5,10-methylene-5,6,7,8-tetrahydrofolate. Serine 263 is a (6R)-5,10-methylene-5,6,7,8-tetrahydrofolate binding site.

Belongs to the thymidylate synthase family. Bacterial-type ThyA subfamily. Homodimer.

The protein resides in the cytoplasm. It catalyses the reaction dUMP + (6R)-5,10-methylene-5,6,7,8-tetrahydrofolate = 7,8-dihydrofolate + dTMP. The protein operates within pyrimidine metabolism; dTTP biosynthesis. In terms of biological role, catalyzes the reductive methylation of 2'-deoxyuridine-5'-monophosphate (dUMP) to 2'-deoxythymidine-5'-monophosphate (dTMP) while utilizing 5,10-methylenetetrahydrofolate (mTHF) as the methyl donor and reductant in the reaction, yielding dihydrofolate (DHF) as a by-product. This enzymatic reaction provides an intracellular de novo source of dTMP, an essential precursor for DNA biosynthesis. This is Thymidylate synthase from Phocaeicola vulgatus (strain ATCC 8482 / DSM 1447 / JCM 5826 / CCUG 4940 / NBRC 14291 / NCTC 11154) (Bacteroides vulgatus).